The primary structure comprises 128 residues: Glycine cleavage system H protein (128 aa).

The Lipoyl-binding domain maps to 24–106 (SVTVGITAHA…YGDGWFFKIK (83 aa)). Residue K65 is modified to N6-lipoyllysine.

It belongs to the GcvH family. The glycine cleavage system is composed of four proteins: P, T, L and H. Requires (R)-lipoate as cofactor.

In terms of biological role, the glycine cleavage system catalyzes the degradation of glycine. The H protein shuttles the methylamine group of glycine from the P protein to the T protein. In Chromobacterium violaceum (strain ATCC 12472 / DSM 30191 / JCM 1249 / CCUG 213 / NBRC 12614 / NCIMB 9131 / NCTC 9757 / MK), this protein is Glycine cleavage system H protein.